Consider the following 325-residue polypeptide: NADH-quinone oxidoreductase subunit H (325 aa).

The next 8 helical transmembrane spans lie at 11–31, 81–101, 114–134, 154–174, 186–206, 237–257, 265–285, and 304–324; these read ILISVLKAVVILLVVVTCGAF, AIFTLAPVIAFTSLLLSFAIV, IGILFFLMMAGLAVYAVLFAG, LSYEVFLGLSLMGVVAQVGSF, VWNVIPQFFGFLTFAIAGVAV, FFVGEYIGIVTVSALIVTLFF, LPPFIWFALKTAFFMVMFILI, and VCLPLTLLNLLATAAVILYNA.

The protein belongs to the complex I subunit 1 family. In terms of assembly, NDH-1 is composed of 13 different subunits. Subunits NuoA, H, J, K, L, M, N constitute the membrane sector of the complex.

It localises to the cell inner membrane. It catalyses the reaction a quinone + NADH + 5 H(+)(in) = a quinol + NAD(+) + 4 H(+)(out). NDH-1 shuttles electrons from NADH, via FMN and iron-sulfur (Fe-S) centers, to quinones in the respiratory chain. The immediate electron acceptor for the enzyme in this species is believed to be ubiquinone. Couples the redox reaction to proton translocation (for every two electrons transferred, four hydrogen ions are translocated across the cytoplasmic membrane), and thus conserves the redox energy in a proton gradient. This subunit may bind ubiquinone. The sequence is that of NADH-quinone oxidoreductase subunit H from Yersinia pseudotuberculosis serotype O:3 (strain YPIII).